The sequence spans 127 residues: Holo-[acyl-carrier-protein] synthase (127 aa).

Mg(2+)-binding residues include aspartate 9 and glutamate 58.

This sequence belongs to the P-Pant transferase superfamily. AcpS family. Mg(2+) is required as a cofactor.

It localises to the cytoplasm. It carries out the reaction apo-[ACP] + CoA = holo-[ACP] + adenosine 3',5'-bisphosphate + H(+). In terms of biological role, transfers the 4'-phosphopantetheine moiety from coenzyme A to a Ser of acyl-carrier-protein. The protein is Holo-[acyl-carrier-protein] synthase of Shewanella sp. (strain MR-4).